The chain runs to 735 residues: Ion-translocating oxidoreductase complex subunit C (735 aa).

2 4Fe-4S ferredoxin-type domains span residues 368–397 (MGAP…QQLY) and 407–436 (KATA…VQYF). 8 residues coordinate [4Fe-4S] cluster: cysteine 377, cysteine 380, cysteine 383, cysteine 387, cysteine 416, cysteine 419, cysteine 422, and cysteine 426. Positions 534-715 (QARAKQAAHP…AVDPRKAAVA (182 aa)) are disordered. The segment covering 666-689 (QQAGSEPAEPAAPRKAAVEAAIAR) has biased composition (low complexity).

This sequence belongs to the 4Fe4S bacterial-type ferredoxin family. RnfC subfamily. As to quaternary structure, the complex is composed of six subunits: RsxA, RsxB, RsxC, RsxD, RsxE and RsxG. Requires [4Fe-4S] cluster as cofactor.

It is found in the cell inner membrane. Its function is as follows. Part of a membrane-bound complex that couples electron transfer with translocation of ions across the membrane. Required to maintain the reduced state of SoxR. The sequence is that of Ion-translocating oxidoreductase complex subunit C from Salmonella paratyphi B (strain ATCC BAA-1250 / SPB7).